Reading from the N-terminus, the 313-residue chain is 4-hydroxyproline 2-epimerase (313 aa).

Residues 1–23 (MHVIDSHTGGEPTRVILSGGPHL) are disordered. C85 acts as the Proton acceptor in catalysis. Substrate contacts are provided by residues 86 to 87 (GH), H205, and D231. The Proton donor role is filled by C235. Position 236-237 (236-237 (GT)) interacts with substrate.

This sequence belongs to the proline racemase family.

The catalysed reaction is trans-4-hydroxy-L-proline = cis-4-hydroxy-D-proline. In terms of biological role, catalyzes the epimerization of trans-4-hydroxy-L-proline (t4LHyp) to cis-4-hydroxy-D-proline (c4DHyp). Is likely involved in a degradation pathway that converts t4LHyp to alpha-ketoglutarate. Displays no proline racemase activity. The polypeptide is 4-hydroxyproline 2-epimerase (Ruegeria pomeroyi (strain ATCC 700808 / DSM 15171 / DSS-3) (Silicibacter pomeroyi)).